The chain runs to 257 residues: Probable ssDNA-binding protein (257 aa).

Positions 222–257 (AFMEGRENKDDDAKSGNSNAGSQKGIDQEAASDLDD) are disordered. Residues 225-235 (EGRENKDDDAK) are compositionally biased toward basic and acidic residues.

Required during DNA replication. Displaced viral DNA strands are transiently coated with the ssDNA-binding protein. It is then probably removed by the replisome that performs lagging strand synthesis or during the events that lead up to the recombination process. The protein is Probable ssDNA-binding protein (D11) of Escherichia phage T5 (Enterobacteria phage T5).